A 229-amino-acid chain; its full sequence is 3-dehydroquinate dehydratase (229 aa).

Residues 33–35 (EWR) and R65 contribute to the 3-dehydroquinate site. Catalysis depends on H121, which acts as the Proton donor/acceptor. K146 acts as the Schiff-base intermediate with substrate in catalysis. Positions 188, 207, and 211 each coordinate 3-dehydroquinate.

Belongs to the type-I 3-dehydroquinase family. In terms of assembly, homodimer.

It catalyses the reaction 3-dehydroquinate = 3-dehydroshikimate + H2O. The protein operates within metabolic intermediate biosynthesis; chorismate biosynthesis; chorismate from D-erythrose 4-phosphate and phosphoenolpyruvate: step 3/7. Its function is as follows. Involved in the third step of the chorismate pathway, which leads to the biosynthesis of aromatic amino acids. Catalyzes the cis-dehydration of 3-dehydroquinate (DHQ) and introduces the first double bond of the aromatic ring to yield 3-dehydroshikimate. The protein is 3-dehydroquinate dehydratase of Lactococcus lactis subsp. cremoris (strain MG1363).